The primary structure comprises 188 residues: Putative pre-16S rRNA nuclease (188 aa).

Positions 156-188 are disordered; the sequence is LRQGDAAPGGSDDERDEDGDTDGEDGGGDGGGE. Positions 166–188 are enriched in acidic residues; sequence SDDERDEDGDTDGEDGGGDGGGE.

The protein belongs to the YqgF nuclease family.

Its subcellular location is the cytoplasm. Functionally, could be a nuclease involved in processing of the 5'-end of pre-16S rRNA. In Rhodospirillum centenum (strain ATCC 51521 / SW), this protein is Putative pre-16S rRNA nuclease.